A 274-amino-acid polypeptide reads, in one-letter code: NAD kinase (274 aa).

Aspartate 59 serves as the catalytic Proton acceptor. Residues 59 to 60, lysine 64, 128 to 129, aspartate 158, 169 to 174, and alanine 193 each bind NAD(+); these read DG, ND, and TAYALS.

Belongs to the NAD kinase family. It depends on a divalent metal cation as a cofactor.

The protein resides in the cytoplasm. It catalyses the reaction NAD(+) + ATP = ADP + NADP(+) + H(+). Functionally, involved in the regulation of the intracellular balance of NAD and NADP, and is a key enzyme in the biosynthesis of NADP. Catalyzes specifically the phosphorylation on 2'-hydroxyl of the adenosine moiety of NAD to yield NADP. The sequence is that of NAD kinase from Petrotoga mobilis (strain DSM 10674 / SJ95).